The primary structure comprises 281 residues: Bifunctional protein FolD (281 aa).

Residue 163 to 165 (GRS) participates in NADP(+) binding.

The protein belongs to the tetrahydrofolate dehydrogenase/cyclohydrolase family. Homodimer.

The enzyme catalyses (6R)-5,10-methylene-5,6,7,8-tetrahydrofolate + NADP(+) = (6R)-5,10-methenyltetrahydrofolate + NADPH. It catalyses the reaction (6R)-5,10-methenyltetrahydrofolate + H2O = (6R)-10-formyltetrahydrofolate + H(+). The protein operates within one-carbon metabolism; tetrahydrofolate interconversion. Catalyzes the oxidation of 5,10-methylenetetrahydrofolate to 5,10-methenyltetrahydrofolate and then the hydrolysis of 5,10-methenyltetrahydrofolate to 10-formyltetrahydrofolate. The chain is Bifunctional protein FolD from Leuconostoc mesenteroides subsp. mesenteroides (strain ATCC 8293 / DSM 20343 / BCRC 11652 / CCM 1803 / JCM 6124 / NCDO 523 / NBRC 100496 / NCIMB 8023 / NCTC 12954 / NRRL B-1118 / 37Y).